A 244-amino-acid chain; its full sequence is DNA repair protein RecO (244 aa).

This sequence belongs to the RecO family.

Functionally, involved in DNA repair and RecF pathway recombination. The protein is DNA repair protein RecO of Ehrlichia chaffeensis (strain ATCC CRL-10679 / Arkansas).